Consider the following 330-residue polypeptide: tRNA N6-adenosine threonylcarbamoyltransferase (330 aa).

Residues His110 and His114 each contribute to the Fe cation site. Substrate contacts are provided by residues 133–137, Asp166, Gly179, Asp183, and Asn271; that span reads MVSGG. Position 299 (Asp299) interacts with Fe cation.

Belongs to the KAE1 / TsaD family. It depends on Fe(2+) as a cofactor.

The protein resides in the cytoplasm. It catalyses the reaction L-threonylcarbamoyladenylate + adenosine(37) in tRNA = N(6)-L-threonylcarbamoyladenosine(37) in tRNA + AMP + H(+). In terms of biological role, required for the formation of a threonylcarbamoyl group on adenosine at position 37 (t(6)A37) in tRNAs that read codons beginning with adenine. Is involved in the transfer of the threonylcarbamoyl moiety of threonylcarbamoyl-AMP (TC-AMP) to the N6 group of A37, together with TsaE and TsaB. TsaD likely plays a direct catalytic role in this reaction. This is tRNA N6-adenosine threonylcarbamoyltransferase from Thermosipho africanus (strain TCF52B).